We begin with the raw amino-acid sequence, 298 residues long: Estradiol 17-beta-dehydrogenase 11 (298 aa).

An N-terminal signal peptide occupies residues 1 to 21; it reads MKYLLDLILLLPLLIVFSIES. Position 40-64 (40-64) interacts with NADP(+); sequence LITGAGHGIGRLTAYEFAKLNTKLV. Substrate is bound at residue Ser-172. The active-site Proton acceptor is the Tyr-185.

This sequence belongs to the short-chain dehydrogenases/reductases (SDR) family. 17-beta-HSD 3 subfamily. As to expression, expressed in the liver (at protein level). Also expressed in the intestine and, at much lower levels, in the kidney.

It is found in the endoplasmic reticulum. The protein resides in the lipid droplet. The catalysed reaction is 17beta-estradiol + NAD(+) = estrone + NADH + H(+). The enzyme catalyses 17beta-estradiol + NADP(+) = estrone + NADPH + H(+). Functionally, can convert androstan-3-alpha,17-beta-diol (3-alpha-diol) to androsterone in vitro, suggesting that it may participate in androgen metabolism during steroidogenesis. May act by metabolizing compounds that stimulate steroid synthesis and/or by generating metabolites that inhibit it. Has no activity toward DHEA (dehydroepiandrosterone), or A-dione (4-androste-3,17-dione), and only a slight activity toward testosterone to A-dione. The polypeptide is Estradiol 17-beta-dehydrogenase 11 (Hsd17b11) (Mus musculus (Mouse)).